We begin with the raw amino-acid sequence, 288 residues long: ATP synthase gamma chain (288 aa).

It belongs to the ATPase gamma chain family. F-type ATPases have 2 components, CF(1) - the catalytic core - and CF(0) - the membrane proton channel. CF(1) has five subunits: alpha(3), beta(3), gamma(1), delta(1), epsilon(1). CF(0) has three main subunits: a, b and c.

It is found in the cell membrane. Functionally, produces ATP from ADP in the presence of a proton gradient across the membrane. The gamma chain is believed to be important in regulating ATPase activity and the flow of protons through the CF(0) complex. This is ATP synthase gamma chain from Staphylococcus epidermidis (strain ATCC 35984 / DSM 28319 / BCRC 17069 / CCUG 31568 / BM 3577 / RP62A).